The chain runs to 418 residues: MSQIFKERNHFYIRICEGYVLPLLLILHDHQYFNNIQFLELITVLQGIIRNHFKNGMGLRSTYIAPESASTSKPIYLSDIGFTIRFAPTYPRYSIMVKNIKPQENRNEPIKIKRKETIYIDNKVKDSINNSNNNNNKKDKKDKNKQNEEDHLIIDDVIDEEIQEKEDNESDSDKKKLITKITTTTTTTIPTSSPTNIIDDNVEVIETRFDKEEKEREKEKEKEKEKEEKEEDIDILNDRAIALAATQEYEDDDVIFIKDDNDNDKNQNQNQNQNNNNNNNNNNNNNNNNNNNNEGEEEDEELPYQGGMYKGLYVTGHTMIVETQIKVAGATTLISQFHVANEDKDADDSDDFDEFNLPDTESQLSKSKQKSPNVKKTTTTTTTSTSTSSRKQSKSKLKPKSKSTMATNNGGISLYFKK.

Disordered stretches follow at residues 123–174, 209–231, 258–302, and 344–418; these read KVKD…DSDK, FDKEEKEREKEKEKEKEKEEKEE, KDDN…DEEL, and KDAD…YFKK. Over residues 136–154 the composition is skewed to basic and acidic residues; it reads NKKDKKDKNKQNEEDHLII. The segment covering 156–170 has biased composition (acidic residues); the sequence is DVIDEEIQEKEDNES. Residues 209–227 are compositionally biased toward basic and acidic residues; it reads FDKEEKEREKEKEKEKEKE. Residues 266-293 are compositionally biased toward low complexity; that stretch reads NQNQNQNQNNNNNNNNNNNNNNNNNNNN. A compositionally biased stretch (acidic residues) spans 344–356; that stretch reads KDADDSDDFDEFN. A compositionally biased stretch (polar residues) spans 359–374; that stretch reads DTESQLSKSKQKSPNV. Residues 375–390 show a composition bias toward low complexity; sequence KKTTTTTTTSTSTSSR. The segment covering 391 to 401 has biased composition (basic residues); that stretch reads KQSKSKLKPKS.

This is an uncharacterized protein from Dictyostelium discoideum (Social amoeba).